The chain runs to 355 residues: MNPIRKIIHIDMDCFYAAIEMRDFPELANKPIAVGGDAKRRGVIATCNYAARQFGIRSAMPTAHALKLCRELILRPVRMDVYQKESQYIRSLLTEYTDLIEPLSLDEAYLDVTESTQCQGSATWIAEEIRARIYQTRQLTASAGIAPNKSLAKIASDWHKPNGQMVIRPEDVSAFVLDLPVRKLFGVGPKMEEKLGALNIKTCADLQRYSVEYLLQKFGTMGQRLYELARGIDNRPVNPERIRKSISVEETYPKDLPNSEACLAVLPELMARLEARIQRAGKISGIHNLFVKLKFNDFQQTTIERVMDKLDLIVLRQLIQEGFARRGMPVRLLGIGIKLKQENTYQSVQLPLLDL.

A UmuC domain is found at 7-188 (IIHIDMDCFY…LPVRKLFGVG (182 aa)). The Mg(2+) site is built by Asp-11 and Asp-106. The active site involves Glu-107.

The protein belongs to the DNA polymerase type-Y family. Monomer. Mg(2+) is required as a cofactor.

It localises to the cytoplasm. The catalysed reaction is DNA(n) + a 2'-deoxyribonucleoside 5'-triphosphate = DNA(n+1) + diphosphate. Its function is as follows. Poorly processive, error-prone DNA polymerase involved in untargeted mutagenesis. Copies undamaged DNA at stalled replication forks, which arise in vivo from mismatched or misaligned primer ends. These misaligned primers can be extended by PolIV. Exhibits no 3'-5' exonuclease (proofreading) activity. May be involved in translesional synthesis, in conjunction with the beta clamp from PolIII. The protein is DNA polymerase IV of Legionella pneumophila (strain Corby).